The primary structure comprises 559 residues: Urocanate hydratase (559 aa).

Residues 53–54 (GG), Gln-131, 177–179 (GMG), Glu-197, Arg-202, 243–244 (NA), 264–268 (QTSAH), 274–275 (YL), and Tyr-323 each bind NAD(+). The active site involves Cys-411. Gly-493 contacts NAD(+).

It belongs to the urocanase family. The cofactor is NAD(+).

It localises to the cytoplasm. The enzyme catalyses 4-imidazolone-5-propanoate = trans-urocanate + H2O. The protein operates within amino-acid degradation; L-histidine degradation into L-glutamate; N-formimidoyl-L-glutamate from L-histidine: step 2/3. Its function is as follows. Catalyzes the conversion of urocanate to 4-imidazolone-5-propionate. This Pseudomonas paraeruginosa (strain DSM 24068 / PA7) (Pseudomonas aeruginosa (strain PA7)) protein is Urocanate hydratase.